Consider the following 736-residue polypeptide: Phosphoribosylformylglycinamidine synthase subunit PurL (736 aa).

H49 is a catalytic residue. ATP is bound by residues Y52 and K91. A Mg(2+)-binding site is contributed by E93. Substrate-binding positions include S94–H97 and R116. The active-site Proton acceptor is the H95. D117 is a Mg(2+) binding site. Q240 contributes to the substrate binding site. Residue D268 coordinates Mg(2+). E312–Q314 contributes to the substrate binding site. The ATP site is built by D493 and G530. N531 provides a ligand contact to Mg(2+). Substrate is bound at residue S533.

This sequence belongs to the FGAMS family. Monomer. Part of the FGAM synthase complex composed of 1 PurL, 1 PurQ and 2 PurS subunits.

It localises to the cytoplasm. The enzyme catalyses N(2)-formyl-N(1)-(5-phospho-beta-D-ribosyl)glycinamide + L-glutamine + ATP + H2O = 2-formamido-N(1)-(5-O-phospho-beta-D-ribosyl)acetamidine + L-glutamate + ADP + phosphate + H(+). It functions in the pathway purine metabolism; IMP biosynthesis via de novo pathway; 5-amino-1-(5-phospho-D-ribosyl)imidazole from N(2)-formyl-N(1)-(5-phospho-D-ribosyl)glycinamide: step 1/2. In terms of biological role, part of the phosphoribosylformylglycinamidine synthase complex involved in the purines biosynthetic pathway. Catalyzes the ATP-dependent conversion of formylglycinamide ribonucleotide (FGAR) and glutamine to yield formylglycinamidine ribonucleotide (FGAM) and glutamate. The FGAM synthase complex is composed of three subunits. PurQ produces an ammonia molecule by converting glutamine to glutamate. PurL transfers the ammonia molecule to FGAR to form FGAM in an ATP-dependent manner. PurS interacts with PurQ and PurL and is thought to assist in the transfer of the ammonia molecule from PurQ to PurL. This is Phosphoribosylformylglycinamidine synthase subunit PurL from Rhodopseudomonas palustris (strain HaA2).